The chain runs to 509 residues: tRNA-2-methylthio-N(6)-dimethylallyladenosine synthase (509 aa).

Residues 1 to 20 form a disordered region; that stretch reads MNEKQKQESGQVNPADKTSE. In terms of domain architecture, MTTase N-terminal spans 66–184; that stretch reads RKFYIRTYGC…LPELLSEAYL (119 aa). Cysteine 75, cysteine 111, cysteine 145, cysteine 221, cysteine 225, and cysteine 228 together coordinate [4Fe-4S] cluster. A Radical SAM core domain is found at 207–437; that stretch reads RNGKIKGWVN…NDLVKEISAK (231 aa). The region spanning 440–503 is the TRAM domain; that stretch reads KEYEGRTVEV…TWSLDGVMAG (64 aa).

The protein belongs to the methylthiotransferase family. MiaB subfamily. Monomer. The cofactor is [4Fe-4S] cluster.

The protein resides in the cytoplasm. It carries out the reaction N(6)-dimethylallyladenosine(37) in tRNA + (sulfur carrier)-SH + AH2 + 2 S-adenosyl-L-methionine = 2-methylsulfanyl-N(6)-dimethylallyladenosine(37) in tRNA + (sulfur carrier)-H + 5'-deoxyadenosine + L-methionine + A + S-adenosyl-L-homocysteine + 2 H(+). In terms of biological role, catalyzes the methylthiolation of N6-(dimethylallyl)adenosine (i(6)A), leading to the formation of 2-methylthio-N6-(dimethylallyl)adenosine (ms(2)i(6)A) at position 37 in tRNAs that read codons beginning with uridine. This chain is tRNA-2-methylthio-N(6)-dimethylallyladenosine synthase, found in Bacillus velezensis (strain DSM 23117 / BGSC 10A6 / LMG 26770 / FZB42) (Bacillus amyloliquefaciens subsp. plantarum).